Here is a 391-residue protein sequence, read N- to C-terminus: MRRTRSTRRALLVAVCLSPLIALAAWQAYPFRSNNFDTVSVSRGSIESSVSALGTLQPRRYVDVGAQASGQIRKLHVEAGDDVTEGQLLVEIDPSTQQAKVDAGRYSIEMLKAQLAEQRAQYTLARQQYQRQQRLAAGGATRTEDVQSAQAQMLATQARIEMYQAQIRQAQASLRSDEAELGYTRIYAPMSGTVVAVDAREGQTLNAQQQTPLILRIAKLSPMTVWAQVSEADIGRVKPGMPAYFTTLSGEGRRWTGKVRQILPVPPKPLDQSNQGGGSPTSGSGGQSGSGRVVLYTVLVDVDNGDHQLMAEMTAQVFFVAATAENILTAPVAAIHDDGKGGQVAWVVGSNGKPQSRQIRTGISDRLRVQVLAGLEEGDRLLMAAPDGSDS.

The first 24 residues, 1–24, serve as a signal peptide directing secretion; that stretch reads MRRTRSTRRALLVAVCLSPLIALA. Positions 108–180 form a coiled coil; the sequence is IEMLKAQLAE…QASLRSDEAE (73 aa). A disordered region spans residues 263–289; the sequence is LPVPPKPLDQSNQGGGSPTSGSGGQSG. Residues 275–289 show a composition bias toward gly residues; it reads QGGGSPTSGSGGQSG.

This sequence belongs to the membrane fusion protein (MFP) (TC 8.A.1) family. As to quaternary structure, part of the tripartite efflux system PvdRT-OpmQ, which is composed of an inner membrane component with both ATPase and permease domains, PvdT, a periplasmic membrane fusion protein, PvdR, and an outer membrane component, OpmQ.

It localises to the periplasm. Part of the tripartite efflux system PvdRT-OpmQ required for the secretion into the extracellular milieu of the siderophore pyoverdine (PVD), which is involved in iron acquisition. This subunit is an adapter protein that stimulates the ATPase activity of PvdT and connects the inner and outer membrane components. The system is responsible for export of newly synthesized PVD after the final steps of biosynthesis have taken place in the periplasm. It is also responsible for recycling of PVD after internalization of ferri-PVD into the periplasm by the outer-membrane receptor FpvA and release of iron from PVD, thus making PVD available for new cycles of iron uptake. In addition, can expel unwanted metals complexed with PVD from the periplasm into the extracellular medium. Does not contribute to resistance to antibiotics belonging to the classes of tetracyclines, aminoglycosides, beta-lactams and macrolides, and chloramphenicol. This chain is Pyoverdine export membrane fusion protein PvdR, found in Pseudomonas aeruginosa (strain ATCC 15692 / DSM 22644 / CIP 104116 / JCM 14847 / LMG 12228 / 1C / PRS 101 / PAO1).